The primary structure comprises 205 residues: LexA repressor (205 aa).

Residues 28-48 constitute a DNA-binding region (H-T-H motif); sequence VREIGEAVGLASSSTVHGHLA. Active-site for autocatalytic cleavage activity residues include Ser-127 and Lys-165.

The protein belongs to the peptidase S24 family. Homodimer. In terms of processing, following treatment with mitomycin C protein levels begin to decrease after a 5-min lag and do not return to their original levels for at least 90 minutes.

The enzyme catalyses Hydrolysis of Ala-|-Gly bond in repressor LexA.. Functionally, represses dinA, dinB, dinC, recA genes and itself by binding to the 14 bp palindromic sequence 5'-CGAACNNNNGTTCG-3'; some genes have a tandem consensus sequence and their binding is cooperative. In the presence of single-stranded DNA, RecA interacts with LexA causing an autocatalytic cleavage which disrupts the DNA-binding part of LexA, leading to derepression of the SOS regulon and eventually DNA repair; autocleavage is maximal at pH 11 in the absence of RecA and ssDNA. The chain is LexA repressor from Bacillus subtilis (strain 168).